Here is a 494-residue protein sequence, read N- to C-terminus: Glycerol kinase (494 aa).

Threonine 12 contacts ADP. Threonine 12, threonine 13, and serine 14 together coordinate ATP. Threonine 12 lines the sn-glycerol 3-phosphate pocket. Position 16 (arginine 16) interacts with ADP. Arginine 82, glutamate 83, tyrosine 134, and aspartate 243 together coordinate sn-glycerol 3-phosphate. Glycerol is bound by residues arginine 82, glutamate 83, tyrosine 134, aspartate 243, and glutamine 244. Residues threonine 265 and glycine 308 each coordinate ADP. Threonine 265, glycine 308, glutamine 312, and glycine 408 together coordinate ATP. Positions 408 and 412 each coordinate ADP.

Belongs to the FGGY kinase family.

It carries out the reaction glycerol + ATP = sn-glycerol 3-phosphate + ADP + H(+). Its pathway is polyol metabolism; glycerol degradation via glycerol kinase pathway; sn-glycerol 3-phosphate from glycerol: step 1/1. With respect to regulation, inhibited by fructose 1,6-bisphosphate (FBP). In terms of biological role, key enzyme in the regulation of glycerol uptake and metabolism. Catalyzes the phosphorylation of glycerol to yield sn-glycerol 3-phosphate. The polypeptide is Glycerol kinase (Marinomonas sp. (strain MWYL1)).